Consider the following 259-residue polypeptide: O-antigen export system permease protein RfbA (259 aa).

6 consecutive transmembrane segments (helical) span residues F33 to F53, F73 to I95, V111 to V131, W142 to F162, V176 to I196, and E228 to F248. The ABC transmembrane type-2 domain occupies F33–L251.

This sequence belongs to the ABC-2 integral membrane protein family.

The protein localises to the cell inner membrane. May form an ATP-driven O-antigen export apparatus, in association with RfbB. The protein is O-antigen export system permease protein RfbA (rfbA) of Klebsiella pneumoniae.